We begin with the raw amino-acid sequence, 87 residues long: Large ribosomal subunit protein bL27 (87 aa).

It belongs to the bacterial ribosomal protein bL27 family.

This is Large ribosomal subunit protein bL27 from Stenotrophomonas maltophilia (strain K279a).